The following is a 678-amino-acid chain: NADPH--cytochrome P450 reductase (678 aa).

Glycine 2 carries the N-acetylglycine modification. Topologically, residues 2-21 (GDSHVDTGATSTEAVAEEVS) are lumenal. Residues 22 to 42 (LFSMTDMILLSVLVGFLTYFF) traverse the membrane as a helical segment. The Cytoplasmic portion of the chain corresponds to 43 to 678 (LFRKKKEEIP…KGRYSLDVWS (636 aa)). Serine 63 is modified (phosphoserine). The region spanning 80–224 (IIVFYGSQTG…DFITWREQFW (145 aa)) is the Flavodoxin-like domain. FMN is bound by residues 86–91 (SQTGTA), 138–141 (ATYG), 173–182 (LGNKTYEHFN), and aspartate 208. In terms of domain architecture, FAD-binding FR-type spans 279-521 (KNPFLAAVTT…FVRKSQFRLP (243 aa)). Arginine 298 serves as a coordination point for NADP(+). Residues arginine 424, 454–457 (RYYS), 472–474 (CAV), tyrosine 478, and 488–491 (GVAT) contribute to the FAD site. NADP(+) contacts are provided by residues threonine 535, 596–597 (SR), 602–606 (KVYVQ), and aspartate 639. Tryptophan 677 contacts FAD.

Belongs to the NADPH--cytochrome P450 reductase family. This sequence in the N-terminal section; belongs to the flavodoxin family. The protein in the C-terminal section; belongs to the flavoprotein pyridine nucleotide cytochrome reductase family. FAD is required as a cofactor. The cofactor is FMN.

It is found in the endoplasmic reticulum membrane. It catalyses the reaction 2 oxidized [cytochrome P450] + NADPH = 2 reduced [cytochrome P450] + NADP(+) + H(+). Functionally, this enzyme is required for electron transfer from NADP to cytochrome P450 in microsomes. It can also provide electron transfer to heme oxygenase and cytochrome B5. The chain is NADPH--cytochrome P450 reductase from Cavia porcellus (Guinea pig).